A 745-amino-acid chain; its full sequence is MTSNFSSTVAGLPRIGAKRELKFALEGYWNGSIEGRELAQTARQLVNTASDSLSGLDSVPFAGRSYYDAMLDTAAILGVLPERFDDIADHENDGLPLWIDRYFGAARGTETLPAQAMTKWFDTNYHYLVPELSADTRFVLDASALIEDLRCQQVRGVNARPVLVGPLTFLSLARTTDGSNPLDHLPALFEVYERLIKSFDTEWVQIDEPALVTDVAPEVLEQVRAGYTTLAKRDGVFVNTYFGSGDQALNTLAGIGLGAIGVDLVTHGVTELAAWKGEELLVAGIVDGRNIWRTDLCAALASLKRLAARGPIAVSTSCSLLHVPYTLEAENIEPEVRDWLAFGSEKITEVKLLADALAGNIDAAAFDAASAAIASRRTSPRTAPITQELPGRSRGSFDTRVTLQEKSLELPALPTTTIGSFPQTPSIRSARARLRKESITLEQYEEAMREEIDLVIAKQEELGLDVLVHGEPERNDMVQYFSELLDGFLSTANGWVQSYGSRCVRPPVLFGNVSRPAPMTVKWFQYAQSLTQKHVKGMLTGPVTILAWSFVRDDQPLATTADQVALALRDEINDLIEAGAKIIQVDEPAIRELLPLRDVDKPAYLQWSVDSFRLATAGAPDDVQIHTHMCYSEFNEVISSVIALDADVTTIEAARSDMQVLAALKSSGFELGVGPGVWDIHSPRVPSAQEVDGLLEAALQSVDPRQLWVNPDCGLKTRGWPEVEASLKVLVESAKQAREKIGATI.

5-methyltetrahydropteroyltri-L-glutamate contacts are provided by residues 19–22 and K119; that span reads RELK. L-homocysteine-binding positions include 418 to 420 and E471; that span reads IGS. L-methionine contacts are provided by residues 418–420 and E471; that span reads IGS. Residues 502–503 and W548 contribute to the 5-methyltetrahydropteroyltri-L-glutamate site; that span reads RC. D586 is an L-homocysteine binding site. D586 contributes to the L-methionine binding site. Residue E592 coordinates 5-methyltetrahydropteroyltri-L-glutamate. H628, C630, and E652 together coordinate Zn(2+). Residue H681 is the Proton donor of the active site. Residue C713 participates in Zn(2+) binding.

It belongs to the vitamin-B12 independent methionine synthase family. Requires Zn(2+) as cofactor.

The catalysed reaction is 5-methyltetrahydropteroyltri-L-glutamate + L-homocysteine = tetrahydropteroyltri-L-glutamate + L-methionine. It participates in amino-acid biosynthesis; L-methionine biosynthesis via de novo pathway; L-methionine from L-homocysteine (MetE route): step 1/1. Its function is as follows. Catalyzes the transfer of a methyl group from 5-methyltetrahydrofolate to homocysteine resulting in methionine formation. In Corynebacterium glutamicum (strain ATCC 13032 / DSM 20300 / JCM 1318 / BCRC 11384 / CCUG 27702 / LMG 3730 / NBRC 12168 / NCIMB 10025 / NRRL B-2784 / 534), this protein is 5-methyltetrahydropteroyltriglutamate--homocysteine methyltransferase.